The following is a 297-amino-acid chain: Protoheme IX farnesyltransferase (297 aa).

The next 9 helical transmembrane spans lie at Val23–Pro43, Val49–Ile69, Ile90–Leu110, Leu117–Leu137, Asn144–Ala164, Ala171–Leu191, Arg215–Ile235, Ser238–Trp258, and Ile277–Ala297.

This sequence belongs to the UbiA prenyltransferase family. Protoheme IX farnesyltransferase subfamily.

It localises to the cell inner membrane. The enzyme catalyses heme b + (2E,6E)-farnesyl diphosphate + H2O = Fe(II)-heme o + diphosphate. It functions in the pathway porphyrin-containing compound metabolism; heme O biosynthesis; heme O from protoheme: step 1/1. In terms of biological role, converts heme B (protoheme IX) to heme O by substitution of the vinyl group on carbon 2 of heme B porphyrin ring with a hydroxyethyl farnesyl side group. The polypeptide is Protoheme IX farnesyltransferase (Bordetella petrii (strain ATCC BAA-461 / DSM 12804 / CCUG 43448)).